A 306-amino-acid polypeptide reads, in one-letter code: MPSQLLNTVLSYLTDILLSLSIVGSFLTIFTFMLYPKLRSYPIKLIIYLCMSIVFSLFFFEISFRSSNSLFCIPAAILVHYFFLANFFWTFSVSFNFFQMIVKRNRDSEFYERYYHLISWGIPFIIIIFCAAFKKYVDRGGFCYLEDQYSVYFGFFMPGVIIVCSNICIYVFVAKEIYKTLRHTPTQKRQTVKEFRVYFSIFVSIGSSWIFGFIYMFSDSNSIIGYIFLILFSISTSLQGFFIFISYCLNYKVFAHYSRSFTQYGVSFFKRWENLDGETTQSGPTGTTDSSSTMTSTTTTTNVYSA.

The Extracellular portion of the chain corresponds to 1 to 15 (MPSQLLNTVLSYLTD). A helical transmembrane segment spans residues 16-36 (ILLSLSIVGSFLTIFTFMLYP). Residues 37 to 41 (KLRSY) lie on the Cytoplasmic side of the membrane. A helical transmembrane segment spans residues 42-62 (PIKLIIYLCMSIVFSLFFFEI). At 63–70 (SFRSSNSL) the chain is on the extracellular side. The chain crosses the membrane as a helical span at residues 71-91 (FCIPAAILVHYFFLANFFWTF). At 92–113 (SVSFNFFQMIVKRNRDSEFYER) the chain is on the cytoplasmic side. The helical transmembrane segment at 114–134 (YYHLISWGIPFIIIIFCAAFK) threads the bilayer. Over 135-152 (KYVDRGGFCYLEDQYSVY) the chain is Extracellular. A helical membrane pass occupies residues 153–173 (FGFFMPGVIIVCSNICIYVFV). The Cytoplasmic segment spans residues 174–196 (AKEIYKTLRHTPTQKRQTVKEFR). Residues 197–217 (VYFSIFVSIGSSWIFGFIYMF) traverse the membrane as a helical segment. Residues 218-222 (SDSNS) lie on the Extracellular side of the membrane. Residues 223–243 (IIGYIFLILFSISTSLQGFFI) form a helical membrane-spanning segment. The Cytoplasmic portion of the chain corresponds to 244-306 (FISYCLNYKV…TTTTTNVYSA (63 aa)). The interval 279–306 (TTQSGPTGTTDSSSTMTSTTTTTNVYSA) is disordered.

It belongs to the G-protein coupled receptor 2 family. LN-TM7 subfamily.

It is found in the membrane. The chain is Latrophilin receptor-like protein A (lrlA) from Dictyostelium discoideum (Social amoeba).